Here is a 325-residue protein sequence, read N- to C-terminus: Homocysteine S-methyltransferase 2 (325 aa).

The 316-residue stretch at 6–321 (LKQFLADNPK…KDIQEISAAV (316 aa)) folds into the Hcy-binding domain. At Thr-138 the chain carries Phosphothreonine. Zn(2+) is bound by residues Cys-239, Cys-306, and Cys-307.

It depends on Zn(2+) as a cofactor.

It localises to the cytoplasm. It is found in the nucleus. It carries out the reaction S-methyl-L-methionine + L-homocysteine = 2 L-methionine + H(+). Its function is as follows. Homocysteine S-methyltransferase involved in the conversion of S-adenosylmethionine (AdoMet) to methionine to control the methionine/AdoMet ratio. Also converts S-methylmethionine (SMM) to methionine. The protein is Homocysteine S-methyltransferase 2 (SAM4) of Saccharomyces cerevisiae (strain ATCC 204508 / S288c) (Baker's yeast).